The following is a 376-amino-acid chain: Putative cytosolic 5'-nucleotidase 3 (376 aa).

Aspartate 119 functions as the Nucleophile in the catalytic mechanism. 2 residues coordinate Mg(2+): aspartate 119 and aspartate 121. Aspartate 121 (proton donor) is an active-site residue. Substrate contacts are provided by residues glutamate 168, serine 189, 236–237 (SA), and lysine 286. Aspartate 312 serves as a coordination point for Mg(2+).

The protein belongs to the pyrimidine 5'-nucleotidase family.

It localises to the cytoplasm. The catalysed reaction is a ribonucleoside 5'-phosphate + H2O = a ribonucleoside + phosphate. In Caenorhabditis elegans, this protein is Putative cytosolic 5'-nucleotidase 3.